We begin with the raw amino-acid sequence, 336 residues long: Dihydroorotate dehydrogenase (quinone) (336 aa).

Residues 62–66 (AGLDK) and Thr-86 contribute to the FMN site. Substrate is bound at residue Lys-66. Residue 111–115 (NRMGF) participates in substrate binding. FMN contacts are provided by Asn-139 and Asn-172. Asn-172 contributes to the substrate binding site. Catalysis depends on Ser-175, which acts as the Nucleophile. Asn-177 serves as a coordination point for substrate. Residues Lys-217 and Thr-245 each contribute to the FMN site. Residue 246 to 247 (NT) participates in substrate binding. Residues Gly-268, Gly-297, and 318 to 319 (YS) contribute to the FMN site.

This sequence belongs to the dihydroorotate dehydrogenase family. Type 2 subfamily. In terms of assembly, monomer. FMN is required as a cofactor.

The protein localises to the cell membrane. The enzyme catalyses (S)-dihydroorotate + a quinone = orotate + a quinol. The protein operates within pyrimidine metabolism; UMP biosynthesis via de novo pathway; orotate from (S)-dihydroorotate (quinone route): step 1/1. Functionally, catalyzes the conversion of dihydroorotate to orotate with quinone as electron acceptor. The polypeptide is Dihydroorotate dehydrogenase (quinone) (Escherichia coli (strain SE11)).